Consider the following 100-residue polypeptide: Nucleoid-associated protein jhp_0031 (100 aa).

It belongs to the YbaB/EbfC family. As to quaternary structure, homodimer.

The protein localises to the cytoplasm. The protein resides in the nucleoid. Its function is as follows. Binds to DNA and alters its conformation. May be involved in regulation of gene expression, nucleoid organization and DNA protection. In Helicobacter pylori (strain J99 / ATCC 700824) (Campylobacter pylori J99), this protein is Nucleoid-associated protein jhp_0031.